A 115-amino-acid chain; its full sequence is Rubredoxin (115 aa).

A Rubredoxin-like domain is found at 15–66 (SPNHECRACGYVYIPSQGDQKTSVSPGTPFEALPLNWKCPVCGAPRNYFIST). Residues cysteine 20, cysteine 23, cysteine 53, and cysteine 56 each coordinate Fe cation.

The protein belongs to the rubredoxin family. Requires Fe(3+) as cofactor.

Rubredoxin is a small nonheme, iron protein lacking acid-labile sulfide. Its single Fe, chelated to 4 Cys, functions as an electron acceptor and may also stabilize the conformation of the molecule. Could be involved in hydrogenase-linked redox processes. This chain is Rubredoxin (rub), found in Synechocystis sp. (strain ATCC 27184 / PCC 6803 / Kazusa).